The sequence spans 452 residues: DNA primase DnaG (452 aa).

Residues 172-248 enclose the Toprim domain; that stretch reads DTVIIVEGRA…DIDYIARAPP (77 aa). Glu-178, Asp-222, and Asp-224 together coordinate Mg(2+). The interval 289 to 320 is disordered; the sequence is KKQIEQAQVQPSAAPTSPQPQPESTQPTQPIQ. A compositionally biased stretch (low complexity) spans 294–320; the sequence is QAQVQPSAAPTSPQPQPESTQPTQPIQ.

The protein belongs to the archaeal DnaG primase family. As to quaternary structure, forms a ternary complex with MCM helicase and DNA. Component of the archaeal exosome complex. It depends on Mg(2+) as a cofactor.

The enzyme catalyses ssDNA + n NTP = ssDNA/pppN(pN)n-1 hybrid + (n-1) diphosphate.. In terms of biological role, RNA polymerase that catalyzes the synthesis of short RNA molecules used as primers for DNA polymerase during DNA replication. Also part of the exosome, which is a complex involved in RNA degradation. Acts as a poly(A)-binding protein that enhances the interaction between heteromeric, adenine-rich transcripts and the exosome. The chain is DNA primase DnaG from Caldivirga maquilingensis (strain ATCC 700844 / DSM 13496 / JCM 10307 / IC-167).